A 310-amino-acid polypeptide reads, in one-letter code: Acetyl-coenzyme A carboxylase carboxyl transferase subunit alpha (310 aa).

One can recognise a CoA carboxyltransferase C-terminal domain in the interval 31–285; it reads SFERELRIIN…KQKILRRLKQ (255 aa).

It belongs to the AccA family. As to quaternary structure, acetyl-CoA carboxylase is a heterohexamer composed of biotin carboxyl carrier protein (accB), biotin carboxylase (accC) and two subunits each of ACCase subunit alpha (accA) and ACCase subunit beta (accD).

It is found in the plastid. The protein resides in the chloroplast. The enzyme catalyses N(6)-carboxybiotinyl-L-lysyl-[protein] + acetyl-CoA = N(6)-biotinyl-L-lysyl-[protein] + malonyl-CoA. It functions in the pathway lipid metabolism; malonyl-CoA biosynthesis; malonyl-CoA from acetyl-CoA: step 1/1. Component of the acetyl coenzyme A carboxylase (ACC) complex. First, biotin carboxylase catalyzes the carboxylation of biotin on its carrier protein (BCCP) and then the CO(2) group is transferred by the carboxyltransferase to acetyl-CoA to form malonyl-CoA. This Cyanidioschyzon merolae (strain NIES-3377 / 10D) (Unicellular red alga) protein is Acetyl-coenzyme A carboxylase carboxyl transferase subunit alpha.